The following is a 341-amino-acid chain: Methionine import ATP-binding protein MetN 2 (341 aa).

The 240-residue stretch at 2–241 (IELKEVVKEY…PQHAVTKRFV (240 aa)) folds into the ABC transporter domain. An ATP-binding site is contributed by 38–45 (GFSGAGKS).

This sequence belongs to the ABC transporter superfamily. Methionine importer (TC 3.A.1.24) family. The complex is composed of two ATP-binding proteins (MetN), two transmembrane proteins (MetI) and a solute-binding protein (MetQ).

It is found in the cell membrane. It carries out the reaction L-methionine(out) + ATP + H2O = L-methionine(in) + ADP + phosphate + H(+). It catalyses the reaction D-methionine(out) + ATP + H2O = D-methionine(in) + ADP + phosphate + H(+). Part of the ABC transporter complex MetNIQ involved in methionine import. Responsible for energy coupling to the transport system. This Staphylococcus aureus (strain MRSA252) protein is Methionine import ATP-binding protein MetN 2.